The chain runs to 255 residues: DASH complex subunit SPC34 (255 aa).

The interval 53-81 (LFSVPPPPPRQTTLTAEQQQQQKPSNRRQ) is disordered. Polar residues predominate over residues 63 to 81 (QTTLTAEQQQQQKPSNRRQ). Positions 176–248 (LAYYEAKIAE…QARLRALDAD (73 aa)) form a coiled coil.

The protein belongs to the DASH complex SPC34 family. Component of the DASH complex consisting of ASK1, DAD1, DAD2, DAD3, DAD4, DAM1, DUO1, HSK3, SPC19 and SPC34, with a stoichiometry of one copy of each subunit per complex. Multiple DASH complexes oligomerize to form a ring that encircles spindle microtubules and organizes the rod-like NDC80 complexes of the outer kinetochore of the outer kinetochore. DASH complex oligomerization strengthens microtubule attachments. On cytoplasmic microtubules, DASH complexes appear to form patches instead of rings.

It localises to the nucleus. The protein resides in the cytoplasm. The protein localises to the cytoskeleton. It is found in the spindle. Its subcellular location is the chromosome. It localises to the centromere. The protein resides in the kinetochore. Its function is as follows. Component of the DASH complex that connects microtubules with kinetochores and couples microtubule depolymerisation to chromosome movement; it is involved in retrieving kinetochores to the spindle poles before their re-orientation on the spindle in early mitosis and allows microtubule depolymerization to pull chromosomes apart and resist detachment during anaphase. Kinetochores, consisting of a centromere-associated inner segment and a microtubule-contacting outer segment, play a crucial role in chromosome segregation by mediating the physical connection between centromeric DNA and microtubules. Kinetochores also serve as an input point for the spindle assembly checkpoint, which delays anaphase until all chromosomes have bioriented on the mitotic spindle. This Chaetomium thermophilum (strain DSM 1495 / CBS 144.50 / IMI 039719) (Thermochaetoides thermophila) protein is DASH complex subunit SPC34.